A 224-amino-acid polypeptide reads, in one-letter code: Probable octanoyltransferase (224 aa).

One can recognise a BPL/LPL catalytic domain in the interval 28–199 (GLTGDIALVT…KLALELGLTP (172 aa)). Substrate-binding positions include 66–73 (RGGDATYH), 130–132 (SIG), and 143–145 (GVA). Cysteine 161 acts as the Acyl-thioester intermediate in catalysis.

The protein belongs to the LipB family.

The protein resides in the cytoplasm. It catalyses the reaction octanoyl-[ACP] + L-lysyl-[protein] = N(6)-octanoyl-L-lysyl-[protein] + holo-[ACP] + H(+). Its pathway is protein modification; protein lipoylation via endogenous pathway; protein N(6)-(lipoyl)lysine from octanoyl-[acyl-carrier-protein]: step 1/2. Its function is as follows. Catalyzes the transfer of endogenously produced octanoic acid from octanoyl-acyl-carrier-protein onto the lipoyl domains of lipoate-dependent enzymes. Lipoyl-ACP can also act as a substrate although octanoyl-ACP is likely to be the physiological substrate. The chain is Probable octanoyltransferase from Pyrobaculum aerophilum (strain ATCC 51768 / DSM 7523 / JCM 9630 / CIP 104966 / NBRC 100827 / IM2).